A 195-amino-acid polypeptide reads, in one-letter code: Transmembrane protein 126A (195 aa).

The Mitochondrial matrix segment spans residues 1-33; sequence MENHKSNNKENITIVDISRKINQLPEAERNLLE. A helical membrane pass occupies residues 34–54; it reads NGSVYVGLNAALCGLIANSLF. The Mitochondrial intermembrane portion of the chain corresponds to 55-56; the sequence is RR. The helical transmembrane segment at 57–77 threads the bilayer; that stretch reads ILNVTKARIAAGLPMAGIPFL. Topologically, residues 78–110 are mitochondrial matrix; it reads TTDLTYRCFVSFPLNTGDLDCETCTITRSGLTG. Residues 111–131 form a helical membrane-spanning segment; it reads LVIGGLYPVFLAIPVNGGLAA. The Mitochondrial intermembrane portion of the chain corresponds to 132–158; that stretch reads RYQSALLPHKGNILSYWIRTSKPVFRK. Residues 159 to 175 traverse the membrane as a helical segment; the sequence is MLFPILLQTMFSAYLGS. At 176–195 the chain is on the mitochondrial matrix side; that stretch reads EQYKLLIKALQLSEPGKEIH.

It belongs to the TMEM126 family. In terms of assembly, interacts with OXA1L; promoting cotranslational quality control in mitochondria. In terms of tissue distribution, strongly expressed in brain, cerebellum, skeletal muscle, testis. High expression also found in fetal brain, fetal retinal pigmentary epithelium, and fetal retina. Highly expressed in retinal ganglion cells.

It localises to the mitochondrion inner membrane. Functionally, protein required for the cotranslational protein quality control in the inner membrane of the mitochondria. Associates with newly synthesized polypeptides and may act as a chaperone that cooperates with OXA1L for the insertion of newly synthesized mitochondrial proteins into the inner membrane. Required for the assembly of the ND4 module of mitochondrial complex I. The protein is Transmembrane protein 126A of Homo sapiens (Human).